A 471-amino-acid chain; its full sequence is Cysteine--tRNA ligase (471 aa).

Residue Cys29 coordinates Zn(2+). Residues 31-41 (PTVYNYIHIGN) carry the 'HIGH' region motif. Zn(2+) contacts are provided by Cys209, His234, and Glu238. The 'KMSKS' region signature appears at 266–270 (KMSKS). Lys269 contacts ATP.

The protein belongs to the class-I aminoacyl-tRNA synthetase family. Monomer. It depends on Zn(2+) as a cofactor.

It is found in the cytoplasm. It carries out the reaction tRNA(Cys) + L-cysteine + ATP = L-cysteinyl-tRNA(Cys) + AMP + diphosphate. The polypeptide is Cysteine--tRNA ligase (Listeria monocytogenes serovar 1/2a (strain ATCC BAA-679 / EGD-e)).